The sequence spans 487 residues: Probable Xaa-Pro aminopeptidase MGYG_06974 (487 aa).

Asp-255, Asp-266, Glu-414, and Glu-458 together coordinate Mn(2+).

The protein belongs to the peptidase M24B family. The cofactor is Mn(2+).

The catalysed reaction is Release of any N-terminal amino acid, including proline, that is linked to proline, even from a dipeptide or tripeptide.. Its function is as follows. Catalyzes the removal of a penultimate prolyl residue from the N-termini of peptides. The protein is Probable Xaa-Pro aminopeptidase MGYG_06974 of Arthroderma gypseum (strain ATCC MYA-4604 / CBS 118893) (Microsporum gypseum).